We begin with the raw amino-acid sequence, 117 residues long: Large ribosomal subunit protein bL19 (117 aa).

It belongs to the bacterial ribosomal protein bL19 family.

Its function is as follows. This protein is located at the 30S-50S ribosomal subunit interface and may play a role in the structure and function of the aminoacyl-tRNA binding site. This Methylibium petroleiphilum (strain ATCC BAA-1232 / LMG 22953 / PM1) protein is Large ribosomal subunit protein bL19.